Consider the following 326-residue polypeptide: Aspartate carbamoyltransferase catalytic subunit (326 aa).

2 residues coordinate carbamoyl phosphate: Arg58 and Thr59. L-aspartate is bound at residue Lys86. Residues Arg108, His141, and Gln144 each coordinate carbamoyl phosphate. The L-aspartate site is built by Arg181 and Arg239. Positions 280 and 281 each coordinate carbamoyl phosphate.

Belongs to the aspartate/ornithine carbamoyltransferase superfamily. ATCase family. In terms of assembly, heterododecamer (2C3:3R2) of six catalytic PyrB chains organized as two trimers (C3), and six regulatory PyrI chains organized as three dimers (R2).

The catalysed reaction is carbamoyl phosphate + L-aspartate = N-carbamoyl-L-aspartate + phosphate + H(+). It functions in the pathway pyrimidine metabolism; UMP biosynthesis via de novo pathway; (S)-dihydroorotate from bicarbonate: step 2/3. Catalyzes the condensation of carbamoyl phosphate and aspartate to form carbamoyl aspartate and inorganic phosphate, the committed step in the de novo pyrimidine nucleotide biosynthesis pathway. This chain is Aspartate carbamoyltransferase catalytic subunit, found in Synechococcus sp. (strain JA-3-3Ab) (Cyanobacteria bacterium Yellowstone A-Prime).